An 846-amino-acid polypeptide reads, in one-letter code: Protein IRS1 (846 aa).

4 disordered regions span residues 1–82 (MAQR…NFWH), 366–385 (TGTAAGTTSPPAASGTETEA), 606–626 (WLMEQPPPPSRQTKPDAATMP), and 714–846 (QVIP…HVHH). Residues 16-25 (RGRGAGGPSG) show a composition bias toward gly residues. A compositionally biased stretch (low complexity) spans 26–56 (VGSSPPSSCVPMGAPSTAGTGASAAATTTPG). Residues 722-732 (EPEDDDEDPTY) show a composition bias toward acidic residues. The segment covering 832-846 (RPKKCQTHAPHHVHH) has biased composition (basic residues).

This sequence belongs to the herpesviridae US22 family. In terms of assembly, interacts (via N-terminus) with the viral DNA polymerase accessory subunit UL44. Interacts (via C-terminus) with host EIF2AK2/PKR.

It is found in the virion. The protein localises to the host cytoplasm. The protein resides in the host nucleus. Functionally, inhibits the establishment of the antiviral state in the infected cell. Prevents the phosphorylation of the host eukaryotic translation initiation factor eIF-2alpha and thus the shutoff of viral and cellular protein synthesis by directly interacting with EIF2AK2/PKR. May also participate in viral DNA replication by interacting with the DNA polymerase accessory protein and the lytic origin of replication, oriLyt. This chain is Protein IRS1 (IRS1), found in Homo sapiens (Human).